The following is a 269-amino-acid chain: MSRFDTLFAQLQAKNEGAFVPFVTLCDPDFDRSFDIICTLADNGADALELGFPFSDPLLDGPVIQAANNRALNAGCSTEKSFRLLAKVRSKYPEIPISLLLCANLIYAQTLDKFYQRCAEAGVDAVLVADIPLLACKDYVTAAKKHGIQPVFICPPNADEKTVAGVASHTEGYTYLVSRAGVTSAENQSHAANLDTLVERLKAHNAAPILQGFGIARPEQVKQALTLGTSGAISGSATVKIIEKNLDNHPACLQELARFTREMKAATHV.

Active-site proton acceptor residues include Glu-49 and Asp-60.

Belongs to the TrpA family. Tetramer of two alpha and two beta chains.

The catalysed reaction is (1S,2R)-1-C-(indol-3-yl)glycerol 3-phosphate + L-serine = D-glyceraldehyde 3-phosphate + L-tryptophan + H2O. It functions in the pathway amino-acid biosynthesis; L-tryptophan biosynthesis; L-tryptophan from chorismate: step 5/5. The alpha subunit is responsible for the aldol cleavage of indoleglycerol phosphate to indole and glyceraldehyde 3-phosphate. The polypeptide is Tryptophan synthase alpha chain (Actinobacillus succinogenes (strain ATCC 55618 / DSM 22257 / CCUG 43843 / 130Z)).